Here is a 269-residue protein sequence, read N- to C-terminus: MNLMNPEFAMPDVQSTVDTRQMPIQRVGVRAVRHPLTVRTAEGETQATVGTWNLDVHLPADQKGTHMSRFVALLEERGGPLTADAFRTMLATMLEKLEARAGRIEVSFPYFVNKTAPVSGVRSLLDYEVTLTGDVRDGLTRVFAKVLVPVTSLCPCSKKISQYGAHNQRSHVTIDAELAADVPVEDLIRIAEEEASCELWGLLKRPDEKFVTERAYENPKFVEDLVRDVARRLDADERIVAYVLEAENFESIHNHSAYALIERDKRRGA.

It belongs to the GTP cyclohydrolase IV family.

The catalysed reaction is GTP + H2O = 7,8-dihydroneopterin 3'-triphosphate + formate + H(+). The protein operates within cofactor biosynthesis; 7,8-dihydroneopterin triphosphate biosynthesis; 7,8-dihydroneopterin triphosphate from GTP: step 1/1. In terms of biological role, converts GTP to 7,8-dihydroneopterin triphosphate. The protein is GTP cyclohydrolase FolE2 of Burkholderia mallei (strain NCTC 10229).